Consider the following 146-residue polypeptide: Large ribosomal subunit protein uL15 (146 aa).

The segment at 1 to 56 (MKLHELRAAEGANKASKRVGRGTGSGLGKTSGKGQNGQNSRSGGGVRPGFEGGQMP) is disordered. 2 stretches are compositionally biased toward gly residues: residues 21–35 (RGTGSGLGKTSGKGQ) and 42–52 (SGGGVRPGFEG).

The protein belongs to the universal ribosomal protein uL15 family. In terms of assembly, part of the 50S ribosomal subunit.

Functionally, binds to the 23S rRNA. The chain is Large ribosomal subunit protein uL15 from Clostridium botulinum (strain Loch Maree / Type A3).